An 833-amino-acid polypeptide reads, in one-letter code: Probable glucan 1,3-beta-glucosidase D (833 aa).

The segment covering 1 to 33 has biased composition (basic and acidic residues); that stretch reads MPTHSRSRDRYGGRDSDREARYDYDYARRRYAT. The segment at 1–228 is disordered; it reads MPTHSRSRDR…RKRQKKLAVV (228 aa). Over 1–305 the chain is Cytoplasmic; it reads MPTHSRSRDR…GGRPFWKRKR (305 aa). Residues 34–45 show a composition bias toward acidic residues; that stretch reads DDDDDYDDDELE. Composition is skewed to basic and acidic residues over residues 46–75 and 97–172; these read HDLT…RDAE and YGDD…ETAA. The segment covering 183 to 196 has biased composition (low complexity); that stretch reads SASHLLSADALAKL. Residues 200–217 are compositionally biased toward basic and acidic residues; that stretch reads YEKEERRKREIAKDAAKA. Residues 306-326 form a helical; Signal-anchor for type II membrane protein membrane-spanning segment; the sequence is WIGLGALIIILVIVIPVAVVV. Residues 327-833 are Extracellular-facing; that stretch reads SKKHDNKSDP…PDFGDLPEYY (507 aa). A disordered region spans residues 331 to 353; sequence DNKSDPADSQGTSPGKSNLDGLS. A glycan (N-linked (GlcNAc...) asparagine) is linked at asparagine 332. Over residues 337-346 the composition is skewed to polar residues; that stretch reads ADSQGTSPGK. Residues asparagine 378, asparagine 383, asparagine 395, asparagine 548, asparagine 560, and asparagine 569 are each glycosylated (N-linked (GlcNAc...) asparagine). Residue glutamate 599 is the Proton donor of the active site. Residues asparagine 638, asparagine 671, and asparagine 691 are each glycosylated (N-linked (GlcNAc...) asparagine). Residue glutamate 704 is the Nucleophile of the active site.

The protein belongs to the glycosyl hydrolase 5 (cellulase A) family.

The protein resides in the cell membrane. It catalyses the reaction Successive hydrolysis of beta-D-glucose units from the non-reducing ends of (1-&gt;3)-beta-D-glucans, releasing alpha-glucose.. In terms of biological role, glucosidase involved in the degradation of cellulosic biomass. Active on lichenan. This chain is Probable glucan 1,3-beta-glucosidase D (exgD), found in Aspergillus fumigatus (strain CBS 144.89 / FGSC A1163 / CEA10) (Neosartorya fumigata).